The primary structure comprises 73 residues: Large ribosomal subunit protein bL31 (73 aa).

The protein belongs to the bacterial ribosomal protein bL31 family. Type A subfamily. As to quaternary structure, part of the 50S ribosomal subunit.

In terms of biological role, binds the 23S rRNA. The protein is Large ribosomal subunit protein bL31 of Chelativorans sp. (strain BNC1).